A 71-amino-acid polypeptide reads, in one-letter code: Non-disulfide-bridged peptide 5.5 (71 aa).

Residues 1–23 (MKTQFIVLIVAIVFLQLLSQSEA) form the signal peptide. L36 carries the leucine amide modification. Positions 40–71 (DLRHLDLDQFDDMFDQPEISAADMKFLQDLLR) are excised as a propeptide.

This sequence belongs to the non-disulfide-bridged peptide (NDBP) superfamily. Short antimicrobial peptide (group 4) family. Expressed by the venom gland.

It localises to the secreted. The protein localises to the target cell membrane. Functionally, antimicrobial peptide. Is active on Mycobacterium abscessus subsp. massiliense (MBC=200 uM), a rapidly growing and emerging pathogen associated with healthcare infections. Also shows antifungal activities. Has a weak hemolytic activity on human erythrocytes (10% at 610 uM), indicating a low toxicity (therapeutic index (TI)=3.05). In addition, treatment of infected macrophages reduces the bacterial load. In vivo, treatment of M.abscessus-infected mice causes a decrease in the bacterial load in the lungs and liver. The chain is Non-disulfide-bridged peptide 5.5 from Hoffmannihadrurus gertschi (Scorpion).